A 239-amino-acid chain; its full sequence is MSSLPQEAALPITNTLFPPPPPYFQAFTDEAIERYETLTGKSLFVNDEKGKTKGKEKKSDDRDMSVDIRIQDLTEEEQNEKLELEGKLEKPRADWVNEDGRWMCFGTMYTTEPIIPTAQSIGLPPFIDPAVEPQESLPPLLHSFLHTLLLLLDTLTMTARTPNELAAAGWASEGDQYIQHLTNLSANMMVASNQLRSAQSEATLVLLMEKELEERRKQTEKLRSKCKEIASGIRALKGL.

2 disordered regions span residues 1 to 21 and 43 to 66; these read MSSL…PPPP and LFVN…DMSV. The segment covering 46 to 66 has biased composition (basic and acidic residues); the sequence is NDEKGKTKGKEKKSDDRDMSV.

It belongs to the Mediator complex subunit 7 family. Component of the Mediator complex.

The protein localises to the nucleus. Functionally, component of the Mediator complex, a coactivator involved in the regulated transcription of nearly all RNA polymerase II-dependent genes. Mediator functions as a bridge to convey information from gene-specific regulatory proteins to the basal RNA polymerase II transcription machinery. Mediator is recruited to promoters by direct interactions with regulatory proteins and serves as a scaffold for the assembly of a functional preinitiation complex with RNA polymerase II and the general transcription factors. The sequence is that of Mediator of RNA polymerase II transcription subunit 7 (MED7) from Cryptococcus neoformans var. neoformans serotype D (strain B-3501A) (Filobasidiella neoformans).